Consider the following 546-residue polypeptide: Chaperonin GroEL 2 (546 aa).

Residues Thr30–Pro33, Lys51, Asp87–Thr91, Gly415, Asn479–Ala481, and Asp495 contribute to the ATP site. Residues Lys526–Met546 form a disordered region. Residues Gly534–Met546 are compositionally biased toward gly residues.

Belongs to the chaperonin (HSP60) family. As to quaternary structure, forms a cylinder of 14 subunits composed of two heptameric rings stacked back-to-back. Interacts with the co-chaperonin GroES.

It localises to the cytoplasm. It catalyses the reaction ATP + H2O + a folded polypeptide = ADP + phosphate + an unfolded polypeptide.. Functionally, together with its co-chaperonin GroES, plays an essential role in assisting protein folding. The GroEL-GroES system forms a nano-cage that allows encapsulation of the non-native substrate proteins and provides a physical environment optimized to promote and accelerate protein folding. In Burkholderia lata (strain ATCC 17760 / DSM 23089 / LMG 22485 / NCIMB 9086 / R18194 / 383), this protein is Chaperonin GroEL 2.